The chain runs to 1431 residues: Probable serine/threonine-protein kinase irlA (1431 aa).

The segment covering 1 to 10 (MTKPIFKSKT) has biased composition (basic residues). Disordered regions lie at residues 1 to 81 (MTKP…EKEE) and 736 to 879 (KREK…NNNK). Positions 25-43 (NEDEEEEEGGEEGGEEEEI) are enriched in acidic residues. Over residues 46–67 (NKNSNNSSSNSNNNNNDNNNNN) the composition is skewed to low complexity. Coiled coils occupy residues 57-97 (NNNN…LDME) and 715-759 (KKRS…NNNN). A compositionally biased stretch (basic and acidic residues) spans 68-81 (GEERKVEKEEEKEE). Residues 738–749 (EKKKQKDKKKNK) are compositionally biased toward basic residues. Low complexity predominate over residues 750–776 (SNQNQKNNNNQNNQSNNNKINSPSSNK). A compositionally biased stretch (polar residues) spans 777–791 (LTQNVTPPSSPVNII). The span at 792–812 (TSSSTTSSSTSSTTSSTTSST) shows a compositional bias: low complexity. The span at 821 to 838 (TLPIKTSSPTKPESQKPS) shows a compositional bias: polar residues. Residues 854 to 878 (NNNNNNNNNNNNNNNNNNNNNNNNN) show a composition bias toward low complexity. Residues 860-971 (NNNNNNNNNN…QESIQLNQTL (112 aa)) are a coiled coil. One can recognise a Protein kinase domain in the interval 987–1261 (RDENNIIGRG…IDTILNHPLF (275 aa)). Residues 993-1001 (IGRGSNGTL) and Lys-1016 contribute to the ATP site. Asp-1130 serves as the catalytic Proton acceptor. Residues 1264–1431 (TNEKIKFYES…NSKDYLNIKF (168 aa)) enclose the KEN domain.

Belongs to the protein kinase superfamily. Ser/Thr protein kinase family.

It carries out the reaction L-seryl-[protein] + ATP = O-phospho-L-seryl-[protein] + ADP + H(+). The catalysed reaction is L-threonyl-[protein] + ATP = O-phospho-L-threonyl-[protein] + ADP + H(+). This chain is Probable serine/threonine-protein kinase irlA (irlA), found in Dictyostelium discoideum (Social amoeba).